The sequence spans 408 residues: Repulsive guidance molecule B homolog drag-1 (408 aa).

The first 22 residues, 1–22 (MSIVYLVSITFIFSVFKPITSC), serve as a signal peptide directing secretion. Topologically, residues 23 to 387 (RVEECAAWFQ…SEIFKKCIPS (365 aa)) are extracellular. N-linked (GlcNAc...) asparagine glycans are attached at residues asparagine 60, asparagine 134, asparagine 183, and asparagine 376. Residues 388-408 (KSIRFYPFLAIFFFALLSLLC) form a helical membrane-spanning segment.

The protein belongs to the repulsive guidance molecule (RGM) family. Interacts with unc-40 (via FN6 domain), dbl-1 and sma-6. Expressed in pharyngeal, hypodermal and intestinal cells.

Its subcellular location is the cell membrane. Probably in association with the cell surface receptor unc-40, positively modulates the BMP-like Sma/Mab signaling pathway through interaction with both the ligand dbl-1 and its type I receptor sma-6. Regulates body size and this may be through modulation of the Sma/Mab signaling pathway. The chain is Repulsive guidance molecule B homolog drag-1 from Caenorhabditis elegans.